A 517-amino-acid polypeptide reads, in one-letter code: 2-isopropylmalate synthase (517 aa).

The 263-residue stretch at 7–269 folds into the Pyruvate carboxyltransferase domain; it reads VIIFDTTLRD…ETGIDTTQIV (263 aa). Positions 16, 204, 206, and 240 each coordinate Mn(2+). The required for the condensation reaction. Not required to bind substrate stretch occupies residues 366–517; the sequence is LADKKREIFD…KPKAQGSGTI (152 aa). The interval 395–517 is regulatory domain; sequence KFISQKISTE…KPKAQGSGTI (123 aa).

The protein belongs to the alpha-IPM synthase/homocitrate synthase family. LeuA type 1 subfamily. As to quaternary structure, homodimer. Remains a homodimer in the presence of L-leucine. It depends on Mn(2+) as a cofactor.

Its subcellular location is the cytoplasm. It carries out the reaction 3-methyl-2-oxobutanoate + acetyl-CoA + H2O = (2S)-2-isopropylmalate + CoA + H(+). The protein operates within amino-acid biosynthesis; L-leucine biosynthesis; L-leucine from 3-methyl-2-oxobutanoate: step 1/4. With respect to regulation, inhibited by 3-bromo substituents and Leu, the pathway end product. In terms of biological role, catalyzes the condensation of the acetyl group of acetyl-CoA with 3-methyl-2-oxobutanoate (2-ketoisovalerate) to form 3-carboxy-3-hydroxy-4-methylpentanoate (2-isopropylmalate). Complements an E.coli deletion. This Neisseria meningitidis serogroup B (strain ATCC BAA-335 / MC58) protein is 2-isopropylmalate synthase.